Reading from the N-terminus, the 184-residue chain is Cytidylate kinase (184 aa).

8 to 16 (GQPGSGKTT) lines the ATP pocket.

This sequence belongs to the cytidylate kinase family. Type 2 subfamily.

The protein localises to the cytoplasm. The catalysed reaction is CMP + ATP = CDP + ADP. It catalyses the reaction dCMP + ATP = dCDP + ADP. In Pyrobaculum arsenaticum (strain DSM 13514 / JCM 11321 / PZ6), this protein is Cytidylate kinase.